The sequence spans 147 residues: Hemoglobin subunit delta (147 aa).

Residues 3–147 form the Globin domain; the sequence is HLTPEEKAAV…VATALAHKYH (145 aa). The heme b site is built by histidine 64 and histidine 93.

This sequence belongs to the globin family. As to quaternary structure, heterotetramer of two delta chains and two alpha chains. Red blood cells.

The protein is Hemoglobin subunit delta (HBD) of Ateles geoffroyi (Black-handed spider monkey).